The chain runs to 338 residues: Glyceraldehyde-3-phosphate dehydrogenase (338 aa).

Residues 11 to 12 and G111 each bind NAD(+); that span reads TI. 140–142 serves as a coordination point for D-glyceraldehyde 3-phosphate; that stretch reads SCN. C141 functions as the Nucleophile in the catalytic mechanism. R169 contributes to the NAD(+) binding site. 195-196 lines the D-glyceraldehyde 3-phosphate pocket; sequence HG. An NAD(+)-binding site is contributed by Q302.

It belongs to the glyceraldehyde-3-phosphate dehydrogenase family. Homotetramer.

It localises to the cytoplasm. It carries out the reaction D-glyceraldehyde 3-phosphate + phosphate + NADP(+) = (2R)-3-phospho-glyceroyl phosphate + NADPH + H(+). The catalysed reaction is D-glyceraldehyde 3-phosphate + phosphate + NAD(+) = (2R)-3-phospho-glyceroyl phosphate + NADH + H(+). It participates in carbohydrate degradation; glycolysis; pyruvate from D-glyceraldehyde 3-phosphate: step 1/5. The chain is Glyceraldehyde-3-phosphate dehydrogenase (gap) from Methanobacterium bryantii.